Reading from the N-terminus, the 778-residue chain is Subtilisin-like protease SBT3.6 (778 aa).

Positions 1–22 (MMNYRTSIYVVLSLVIFLNVQR) are cleaved as a signal peptide. Residues 23–113 (SFVAESSAKR…VIPDSFYKLA (91 aa)) constitute a propeptide, activation peptide. The Inhibitor I9 domain occupies 34 to 113 (VHIVYLGEKQ…VIPDSFYKLA (80 aa)). N-linked (GlcNAc...) asparagine glycosylation is present at N69. In terms of domain architecture, Peptidase S8 spans 117–625 (TWDYLGLSAA…GGLVNPEKSA (509 aa)). Catalysis depends on D147, which acts as the Charge relay system. N-linked (GlcNAc...) asparagine glycosylation is found at N158, N180, N202, and N206. The Charge relay system role is filled by H222. N-linked (GlcNAc...) asparagine glycans are attached at residues N237, N399, N414, and N541. A PA domain is found at 388 to 483 (SLVYPENPGN…ELGTDILLYT (96 aa)). The active-site Charge relay system is the S556. 3 N-linked (GlcNAc...) asparagine glycosylation sites follow: N648, N724, and N759.

This sequence belongs to the peptidase S8 family.

It localises to the secreted. This chain is Subtilisin-like protease SBT3.6, found in Arabidopsis thaliana (Mouse-ear cress).